The primary structure comprises 97 residues: MASQPKSFEEQLAKLQEIVTKLQQGNVSLNDSIELFKEGMTLSNDLKGQLNEAETTLAQMMDENGQLHPAEEKGDDVSNNGVQNQGYKSQFLDGDVF.

The interval 64-97 (NGQLHPAEEKGDDVSNNGVQNQGYKSQFLDGDVF) is disordered. Polar residues predominate over residues 77–88 (VSNNGVQNQGYK).

Belongs to the XseB family. In terms of assembly, heterooligomer composed of large and small subunits.

The protein resides in the cytoplasm. The enzyme catalyses Exonucleolytic cleavage in either 5'- to 3'- or 3'- to 5'-direction to yield nucleoside 5'-phosphates.. In terms of biological role, bidirectionally degrades single-stranded DNA into large acid-insoluble oligonucleotides, which are then degraded further into small acid-soluble oligonucleotides. This Limosilactobacillus fermentum (strain NBRC 3956 / LMG 18251) (Lactobacillus fermentum) protein is Exodeoxyribonuclease 7 small subunit.